The chain runs to 380 residues: Pectin lyase (380 aa).

Positions Met-1–Ala-20 are cleaved as a signal peptide. N-linked (GlcNAc...) asparagine glycosylation is present at Asn-130.

The protein belongs to the polysaccharide lyase 1 family.

It localises to the secreted. It carries out the reaction Eliminative cleavage of (1-&gt;4)-alpha-D-galacturonan methyl ester to give oligosaccharides with 4-deoxy-6-O-methyl-alpha-D-galact-4-enuronosyl groups at their non-reducing ends.. This is Pectin lyase (PNLA) from Colletotrichum gloeosporioides (Anthracnose fungus).